A 369-amino-acid polypeptide reads, in one-letter code: 3',5'-cyclic-nucleotide phosphodiesterase 1 (369 aa).

The protein belongs to the cyclic nucleotide phosphodiesterase class-II family.

It catalyses the reaction a nucleoside 3',5'-cyclic phosphate + H2O = a nucleoside 5'-phosphate + H(+). Its function is as follows. Controls the level of cAMP in yeast cells, together with the high-affinity cAMP phosphodiesterase (PDE2). The protein is 3',5'-cyclic-nucleotide phosphodiesterase 1 (PDE1) of Saccharomyces cerevisiae (strain ATCC 204508 / S288c) (Baker's yeast).